The following is a 356-amino-acid chain: Probable protein phosphatase 2C T23F11.1 (356 aa).

Positions 23 to 286 (LVGSSCMQGW…DNMTVVLVGL (264 aa)) constitute a PPM-type phosphatase domain. Residues Asp59, Gly60, Asp228, and Asp277 each coordinate Mn(2+). A disordered region spans residues 336 to 356 (NAANQEEEEDDNEPAPANFQV).

It belongs to the PP2C family. Mg(2+) is required as a cofactor. The cofactor is Mn(2+).

It carries out the reaction O-phospho-L-seryl-[protein] + H2O = L-seryl-[protein] + phosphate. The catalysed reaction is O-phospho-L-threonyl-[protein] + H2O = L-threonyl-[protein] + phosphate. The protein is Probable protein phosphatase 2C T23F11.1 (ppm-2) of Caenorhabditis elegans.